The chain runs to 308 residues: Dual oxidase maturation factor 1 (308 aa).

Topologically, residues 1-21 (MQANIFPFYPQPRTSFKFDTK) are extracellular. The chain crosses the membrane as a helical span at residues 22–42 (IIEIIIICIVTACTFIIILPG). Residues 43–49 (IRGKSRS) are Cytoplasmic-facing. The chain crosses the membrane as a helical span at residues 50–70 (IWLFRILTSLFIGAVILAVNF). The Extracellular segment spans residues 71–172 (TSDWETGIVT…SPCGLFQQYC (102 aa)). Residues asparagine 94, asparagine 107, and asparagine 119 are each glycosylated (N-linked (GlcNAc...) asparagine). Residues 173 to 195 (ISTYYSSEIMWVAFGSWILYNVL) form a helical membrane-spanning segment. At 196–199 (FSMP) the chain is on the cytoplasmic side. A helical transmembrane segment spans residues 200–220 (VILYGICMMFVTAICMLVSLI). Topologically, residues 221–247 (SFASVRQAPVCNIHFGNAVLKTHFGVS) are extracellular. A helical membrane pass occupies residues 248 to 268 (YWLSLVTGLFCLIVSLVLLFL). The Cytoplasmic portion of the chain corresponds to 269-308 (YKTQPKVIRLIFSYGEEEDLSDKSENEEEHSSALSLNEML).

It belongs to the DUOXA family.

It is found in the membrane. Possible role in maturation and transport from the endoplasmic reticulum to the plasma membrane of functional dual oxidase. This chain is Dual oxidase maturation factor 1 (duoxa1), found in Xenopus tropicalis (Western clawed frog).